Here is a 486-residue protein sequence, read N- to C-terminus: MVQLNQNFIDTITQELPAHLSMDEFIAACDRPLRRSIRVNTLKISSDDFKTLMQPKGWTFDPIPWCEDGFWISYDEEEQLGNALEHIQGLFYIQEASSMLPPTALFTPSAFTTSAKWQCVLDLASAPGSKTTQMAALMQNQGLLVANEYSASRVKVLHANVLRMGASHCALTHFDGRVFGEYLYESFDAVLIDAPCGGEGTVRKDVDALKHWSLDDVLAISETQKALIESAFLALKPGGSLVYSTCTLNRLENQGVCEYLKQVYGDAVQFESLSDLFDGAERATTAEGFLHVWPQIYDSEGFFVAKLTKTASVPRLQPEPKLQKNFPFTPASAKQAQGIKDYFQQDLGISLPDELIMVRDDEFWLFPHEFNAFIGRMRFQRIGIKLADSSKHGFKVRHEAIIALAGKQLSPTAKTVDVSDVEAKEYLMGRDIPLATADKAQGEVIVCYGGAPLGMAKHLGNKLKNNLPRDLVKDKVLLLPEQTKSL.

S-adenosyl-L-methionine contacts are provided by residues Ala124–Lys130, Glu148, Asp175, and Asp193. Cys246 (nucleophile) is an active-site residue.

It belongs to the class I-like SAM-binding methyltransferase superfamily. RsmB/NOP family.

Its subcellular location is the cytoplasm. The enzyme catalyses cytidine(1407) in 16S rRNA + S-adenosyl-L-methionine = 5-methylcytidine(1407) in 16S rRNA + S-adenosyl-L-homocysteine + H(+). Specifically methylates the cytosine at position 1407 (m5C1407) of 16S rRNA. The protein is Ribosomal RNA small subunit methyltransferase F of Shewanella baltica (strain OS223).